We begin with the raw amino-acid sequence, 338 residues long: MENLDALVSQALEAVRHTEDVNALEQIRVHYLGKKGELTQVMKTLGDLPAEERPKVGALINVAKEKVQDALNVRKTELEGAALAARLAAERIDVTLPGRGQPSGGLHPVTRTLERIEQCFSRIGYEVAEGPEVEDDYHNFEALNIPGHHPARAMHDTFYFNANMLLRTHTSPVQVRTMESQQPPIRIVCPGRVYRCDSDLTHSPMFHQVEGLLVDEGVSFADLKGTIEEFLRAFFEKQLEVRFRPSFFPFTEPSAEVDIQCVICSGNGCRVCKQTGWLEVMGCGMVHPNVLRMSNIDPEKFQGFAFGMGAERLAMLRYGVNDLRLFFDNDLRFLGQFR.

Residue glutamate 252 coordinates Mg(2+).

The protein belongs to the class-II aminoacyl-tRNA synthetase family. Phe-tRNA synthetase alpha subunit type 1 subfamily. As to quaternary structure, tetramer of two alpha and two beta subunits. Mg(2+) serves as cofactor.

It localises to the cytoplasm. It carries out the reaction tRNA(Phe) + L-phenylalanine + ATP = L-phenylalanyl-tRNA(Phe) + AMP + diphosphate + H(+). This is Phenylalanine--tRNA ligase alpha subunit from Pseudomonas paraeruginosa (strain DSM 24068 / PA7) (Pseudomonas aeruginosa (strain PA7)).